The primary structure comprises 363 residues: Pyrimidine monooxygenase RutA (363 aa).

FMN-binding positions include I49–K50, N115, E124, R140–Y141, and S190.

The protein belongs to the NtaA/SnaA/DszA monooxygenase family. RutA subfamily.

The enzyme catalyses uracil + FMNH2 + NADH + O2 = (Z)-3-ureidoacrylate + FMN + NAD(+) + H2O + H(+). The catalysed reaction is thymine + FMNH2 + NADH + O2 = (Z)-2-methylureidoacrylate + FMN + NAD(+) + H2O + H(+). In terms of biological role, catalyzes the pyrimidine ring opening between N-3 and C-4 by an unusual flavin hydroperoxide-catalyzed mechanism, adding oxygen atoms in the process to yield ureidoacrylate peracid, that immediately reacts with FMN forming ureidoacrylate and FMN-N(5)-oxide. The FMN-N(5)-oxide reacts spontaneously with NADH to produce FMN. Requires the flavin reductase RutF to regenerate FMN in vivo. In Agrobacterium fabrum (strain C58 / ATCC 33970) (Agrobacterium tumefaciens (strain C58)), this protein is Pyrimidine monooxygenase RutA (rutA).